The chain runs to 274 residues: NAD-dependent protein deacetylase (274 aa).

The Deacetylase sirtuin-type domain occupies 1-274 (MDSRMSDLQA…CDEVLAEVVS (274 aa)). Residues 26–46 (GAGCSTASGIPDYRDGQGQWK) and 104–107 (QNVD) each bind NAD(+). Catalysis depends on His-122, which acts as the Proton acceptor. The Zn(2+) site is built by Cys-130, Cys-133, Cys-181, and Cys-184. NAD(+) is bound by residues 221–223 (GSS), 247–249 (NLG), and Cys-265.

It belongs to the sirtuin family. Class II subfamily. Requires Zn(2+) as cofactor.

The protein resides in the cytoplasm. The enzyme catalyses N(6)-acetyl-L-lysyl-[protein] + NAD(+) + H2O = 2''-O-acetyl-ADP-D-ribose + nicotinamide + L-lysyl-[protein]. Its function is as follows. NAD-dependent protein deacetylase which modulates the activities of several enzymes which are inactive in their acetylated form. This is NAD-dependent protein deacetylase from Bordetella bronchiseptica (strain ATCC BAA-588 / NCTC 13252 / RB50) (Alcaligenes bronchisepticus).